The primary structure comprises 2351 residues: MQIELSTCFFLCLLRFCFSATRRYYLGAVELSWDYMQSDLGELPVDARFPPRVPKSFPFNTSVVYKKTLFVEFTDHLFNIAKPRPPWMGLLGPTIQAEVYDTVVITLKNMASHPVSLHAVGVSYWKASEGAEYDDQTSQREKEDDKVFPGGSHTYVWQVLKENGPMASDPLCLTYSYLSHVDLVKDLNSGLIGALLVCREGSLAKEKTQTLHKFILLFAVFDEGKSWHSETKNSLMQDRDAASARAWPKMHTVNGYVNRSLPGLIGCHRKSVYWHVIGMGTTPEVHSIFLEGHTFLVRNHRQASLEISPITFLTAQTLLMDLGQFLLFCHISSHQHDGMEAYVKVDSCPEEPQLRMKNNEEAEDYDDDLTDSEMDVVRFDDDNSPSFIQIRSVAKKHPKTWVHYIAAEEEDWDYAPLVLAPDDRSYKSQYLNNGPQRIGRKYKKVRFMAYTDETFKTREAIQHESGILGPLLYGEVGDTLLIIFKNQASRPYNIYPHGITDVRPLYSRRLPKGVKHLKDFPILPGEIFKYKWTVTVEDGPTKSDPRCLTRYYSSFVNMERDLASGLIGPLLICYKESVDQRGNQIMSDKRNVILFSVFDENRSWYLTENIQRFLPNPAGVQLEDPEFQASNIMHSINGYVFDSLQLSVCLHEVAYWYILSIGAQTDFLSVFFSGYTFKHKMVYEDTLTLFPFSGETVFMSMENPGLWILGCHNSDFRNRGMTALLKVSSCDKNTGDYYEDSYEDISAYLLSKNNAIEPRSFSQNSRHPSTRQKQFNATTIPENDIEKTDPWFAHRTPMPKIQNVSSSDLLMLLRQSPTPHGLSLSDLQEAKYETFSDDPSPGAIDSNNSLSEMTHFRPQLHHSGDMVFTPESGLQLRLNEKLGTTAATELKKLDFKVSSTSNNLISTIPSDNLAAGTDNTSSLGPPSMPVHYDSQLDTTLFGKKSSPLTESGGPLSLSEENNDSKLLESGLMNSQESSWGKNVSSTESGRLFKGKRAHGPALLTKDNALFKVSISLLKTNKTSNNSATNRKTHIDGPSLLIENSPSVWQNILESDTEFKKVTPLIHDRMLMDKNATALRLNHMSNKTTSSKNMEMVQQKKEGPIPPDAQNPDMSFFKMLFLPESARWIQRTHGKNSLNSGQGPSPKQLVSLGPEKSVEGQNFLSEKNKVVVGKGEFTKDVGLKEMVFPSSRNLFLTNLDNLHENNTHNQEKKIQEEIEKKETLIQENVVLPQIHTVTGTKNFMKNLFLLSTRQNVEGSYDGAYAPVLQDFRSLNDSTNRTKKHTAHFSKKGEEENLEGLGNQTKQIVEKYACTTRISPNTSQQNFVTQRSKRALKQFRLPLEETELEKRIIVDDTSTQWSKNMKHLTPSTLTQIDYNEKEKGAITQSPLSDCLTRSHSIPQANRSPLPIAKVSSFPSIRPIYLTRVLFQDNSSHLPAASYRKKDSGVQESSHFLQGAKKNNLSLAILTLEMTGDQREVGSLGTSATNSVTYKKVENTVLPKPDLPKTSGKVELLPKVHIYQKDLFPTETSNGSPGHLDLVEGSLLQGTEGAIKWNEANRPGKVPFLRVATESSAKTPSKLLDPLAWDNHYGTQIPKEEWKSQEKSPEKTAFKKKDTILSLNACESNHAIAAINEGQNKPEIEVTWAKQGRTERLCSQNPPVLKRHQREITRTTLQSDQEEIDYDDTISVEMKKEDFDIYDEDENQSPRSFQKKTRHYFIAAVERLWDYGMSSSPHVLRNRAQSGSVPQFKKVVFQEFTDGSFTQPLYRGELNEHLGLLGPYIRAEVEDNIMVTFRNQASRPYSFYSSLISYEEDQRQGAEPRKNFVKPNETKTYFWKVQHHMAPTKDEFDCKAWAYFSDVDLEKDVHSGLIGPLLVCHTNTLNPAHGRQVTVQEFALFFTIFDETKSWYFTENMERNCRAPCNIQMEDPTFKENYRFHAINGYIMDTLPGLVMAQDQRIRWYLLSMGSNENIHSIHFSGHVFTVRKKEEYKMALYNLYPGVFETVEMLPSKAGIWRVECLIGEHLHAGMSTLFLVYSNKCQTPLGMASGHIRDFQITASGQYGQWAPKLARLHYSGSINAWSTKEPFSWIKVDLLAPMIIHGIKTQGARQKFSSLYISQFIIMYSLDGKKWQTYRGNSTGTLMVFFGNVDSSGIKHNIFNPPIIARYIRLHPTHYSIRSTLRMELMGCDLNSCSMPLGMESKAISDAQITASSYFTNMFATWSPSKARLHLQGRSNAWRPQVNNPKEWLQVDFQKTMKVTGVTTQGVKSLLTSMYVKEFLISSSQDGHQWTLFFQNGKVKVFQGNQDSFTPVVNSLDPPLLTRYLRIHPQSWVHQIALRMEVLGCEAQDLY.

A signal peptide spans 1 to 19 (MQIELSTCFFLCLLRFCFS). Plastocyanin-like domains lie at 20-198 (ATRR…LLVC) and 206-348 (EKTQ…VDSC). The region spanning 20 to 348 (ATRRYYLGAV…MEAYVKVDSC (329 aa)) is the F5/8 type A 1 domain. An N-linked (GlcNAc...) asparagine glycan is attached at asparagine 60. The cysteines at positions 172 and 198 are disulfide-linked. A glycan (N-linked (GlcNAc...) asparagine) is linked at asparagine 258. Cysteine 267 and cysteine 348 form a disulfide bridge. The residue at position 365 (tyrosine 365) is a Sulfotyrosine. Plastocyanin-like domains lie at 399 to 573 (KTWV…LLIC) and 583 to 730 (NQIM…VSSC). In terms of domain architecture, F5/8 type A 2 spans 399–730 (KTWVHYIAAE…MTALLKVSSC (332 aa)). The cysteines at positions 547 and 573 are disulfide-linked. Asparagine 601 carries an N-linked (GlcNAc...) asparagine glycan. An intrachain disulfide couples cysteine 649 to cysteine 730. Sulfotyrosine is present on residues tyrosine 737, tyrosine 738, and tyrosine 742. The tract at residues 760–1667 (SFSQNSRHPS…NPPVLKRHQR (908 aa)) is b. Residues asparagine 776, asparagine 803, asparagine 847, and asparagine 919 are each glycosylated (N-linked (GlcNAc...) asparagine). Disordered regions lie at residues 906 to 928 (STIP…PPSM) and 941 to 961 (FGKK…SEEN). Residues asparagine 962, asparagine 982, asparagine 1020, asparagine 1024, asparagine 1074, asparagine 1085, asparagine 1204, asparagine 1274, asparagine 1278, asparagine 1301, asparagine 1319, asparagine 1431, and asparagine 1461 are each glycosylated (N-linked (GlcNAc...) asparagine). Tyrosine 1683 and tyrosine 1699 each carry sulfotyrosine. Plastocyanin-like domains are found at residues 1713-1877 (KTRH…LLVC) and 1887-2040 (GRQV…SNKC). The 328-residue stretch at 1713 to 2040 (KTRHYFIAAV…TLFLVYSNKC (328 aa)) folds into the F5/8 type A 3 domain. N-linked (GlcNAc...) asparagine glycosylation occurs at asparagine 1829. Intrachain disulfides connect cysteine 1851/cysteine 1877, cysteine 1918/cysteine 1922, cysteine 2040/cysteine 2188, and cysteine 2193/cysteine 2345. 2 F5/8 type C domains span residues 2040-2188 (CQTP…LMGC) and 2193-2345 (CSMP…VLGC). The N-linked (GlcNAc...) asparagine glycan is linked to asparagine 2137.

This sequence belongs to the multicopper oxidase family. As to quaternary structure, interacts with VWF/vWF. vWF binding is essential for the stabilization of F8 in circulation. In terms of processing, sulfation on Tyr-1699 is essential for binding vWF. Proteolytically cleaved by cathepsin CTSG to produce a partially activated form.

The protein resides in the secreted. It localises to the extracellular space. Functionally, factor VIII, along with calcium and phospholipid, acts as a cofactor for F9/factor IXa when it converts F10/factor X to the activated form, factor Xa. The sequence is that of Coagulation factor VIII (F8) from Homo sapiens (Human).